The following is a 74-amino-acid chain: MTDRTDKAEYFIIKALENGVNVMGLTRGHDTRFHHTEKLDQGEVMIAQFTEHTSAIKVRGKALIQTSHGEITNE.

It belongs to the MtrB family. Oligomer of 11 identical subunits arranged in doughnut-like structure.

Functionally, required for transcription attenuation control in the Trp operon. This trans-acting factor seems to recognize a 10 bases nucleotide sequence in the Trp leader transcript causing transcription termination. Binds the leader RNA only in presence of L-tryptophan. The chain is Transcription attenuation protein MtrB (mtrB) from Oceanobacillus iheyensis (strain DSM 14371 / CIP 107618 / JCM 11309 / KCTC 3954 / HTE831).